The sequence spans 1472 residues: ABC transporter FGM5 (1472 aa).

A run of 11 helical transmembrane segments spans residues 32–52 (IILG…RVAT), 67–87 (FTKL…LILS), 100–120 (FAVA…ALSF), 163–183 (YAGV…LELQ), 197–217 (SPEE…IGIF), 271–291 (ALIV…GFQY), 316–336 (GLIG…ALFW), 386–406 (FHGL…CFLL), 412–432 (LAFI…TAIA), 493–513 (LLIM…VVAF), and 534–554 (LLTN…AAFV). In terms of domain architecture, ABC transmembrane type-1 1 spans 284 to 551 (IAMIGFQYAQ…MFQSVPAVIA (268 aa)). The 230-residue stretch at 605–834 (ISIVDGSFGW…GIYIPTLGLS (230 aa)) folds into the ABC transporter 1 domain. 638–645 (GPVASGKS) provides a ligand contact to ATP. Asn-682, Asn-696, Asn-763, Asn-784, and Asn-843 each carry an N-linked (GlcNAc...) asparagine glycan. 4 helical membrane-spanning segments follow: residues 900-920 (LLSG…MGWW), 938-958 (LFRG…VIFM), 1003-1023 (GELP…FAMA), and 1024-1044 (VVVA…FSII). The ABC transmembrane type-1 2 domain occupies 900–1139 (LLSGIMYAVG…VGVVAISTQL (240 aa)). A glycan (N-linked (GlcNAc...) asparagine) is linked at Asn-1101. Residues 1116 to 1136 (FLATFLNLIVMVLAVGVVAIS) traverse the membrane as a helical segment. The ABC transporter 2 domain occupies 1218-1468 (YKNDDESPAS…EGSWFSQLWA (251 aa)). 1255 to 1262 (GRTGSGKS) contacts ATP. N-linked (GlcNAc...) asparagine glycosylation is found at Asn-1277 and Asn-1293.

It belongs to the ABC transporter superfamily. ABCC family. Conjugate transporter (TC 3.A.1.208) subfamily.

The protein resides in the cell membrane. It participates in secondary metabolite biosynthesis. Functionally, ABC transporter; part of the Fg3_54/C64 gene cluster that mediates the biosynthesis of the octapeptide fusaoctaxin A, a virulence factor that is required for cell-to-cell invasiveness of plant host. The 2 nonribosomal peptide synthetases NRPS9 and NRPS5 form an assembly line which likely utilizes GABA as a starter unit (loaded on the unique module M1 of NRPS9) and sequentially incorporates seven extender units composed of the residues L-Ala, L-allo-Ile, L-Ser, L-Val, L-Ser, L-Leu and L-Leu, respectively. During the process, each of the residues that are tethered on modules M3-M7 of NRPS5 containing an E domain can undergo an epimerization reaction to produce a D-configuration before the transpeptidation reaction occurs. The elongation of the peptidyl chain might be terminated by module M8-mediated L-Leu incorporation, followed by R domain-catalyzed 4 electron reduction to release the resulting octapeptide from the assembly line as an alcohol. Fusaoctaxin A is cleaved by the cluster specific ABC transporter FGM5 to the pentapeptide fusapentaxin A and the tripeptide fusatrixin A. The other enzymes from the cluster, FGM1, FGM2, FGM3 and FGM9 seem not to be involved in the biosynthesis of fusaoctaxin A and their functions have still to be determined. The polypeptide is ABC transporter FGM5 (Gibberella zeae (strain ATCC MYA-4620 / CBS 123657 / FGSC 9075 / NRRL 31084 / PH-1) (Wheat head blight fungus)).